We begin with the raw amino-acid sequence, 304 residues long: 4-diphosphocytidyl-2-C-methyl-D-erythritol kinase (304 aa).

K23 is an active-site residue. 111–121 (PIGGGLGGGSS) contributes to the ATP binding site. D153 is an active-site residue.

It belongs to the GHMP kinase family. IspE subfamily. As to quaternary structure, homodimer.

The enzyme catalyses 4-CDP-2-C-methyl-D-erythritol + ATP = 4-CDP-2-C-methyl-D-erythritol 2-phosphate + ADP + H(+). The protein operates within isoprenoid biosynthesis; isopentenyl diphosphate biosynthesis via DXP pathway; isopentenyl diphosphate from 1-deoxy-D-xylulose 5-phosphate: step 3/6. In terms of biological role, catalyzes the phosphorylation of the position 2 hydroxy group of 4-diphosphocytidyl-2C-methyl-D-erythritol. The polypeptide is 4-diphosphocytidyl-2-C-methyl-D-erythritol kinase (Wigglesworthia glossinidia brevipalpis).